A 452-amino-acid polypeptide reads, in one-letter code: Bifunctional protein GlmU (452 aa).

A pyrophosphorylase region spans residues 1-224; sequence MNIVILAAGQ…EWEVLGVNSK (224 aa). UDP-N-acetyl-alpha-D-glucosamine-binding positions include 6–9, Lys-20, Gln-71, 76–77, 98–100, Gly-134, Glu-149, Asn-164, and Asn-222; these read LAAG, GT, and YGD. Mg(2+) is bound at residue Asp-100. Residue Asn-222 participates in Mg(2+) binding. A linker region spans residues 225–245; that stretch reads VQLAELERQHQLNLAGELLVA. Positions 246-452 are N-acetyltransferase; that stretch reads GVRLADPARI…GWERPKKVKK (207 aa). The UDP-N-acetyl-alpha-D-glucosamine site is built by Arg-328 and Lys-346. His-358 acts as the Proton acceptor in catalysis. UDP-N-acetyl-alpha-D-glucosamine-binding residues include Tyr-361 and Asn-372. Residues Ala-375, 381 to 382, Ser-400, Ala-418, and Arg-435 contribute to the acetyl-CoA site; that span reads NY.

This sequence in the N-terminal section; belongs to the N-acetylglucosamine-1-phosphate uridyltransferase family. In the C-terminal section; belongs to the transferase hexapeptide repeat family. Homotrimer. Requires Mg(2+) as cofactor.

It localises to the cytoplasm. The enzyme catalyses alpha-D-glucosamine 1-phosphate + acetyl-CoA = N-acetyl-alpha-D-glucosamine 1-phosphate + CoA + H(+). It carries out the reaction N-acetyl-alpha-D-glucosamine 1-phosphate + UTP + H(+) = UDP-N-acetyl-alpha-D-glucosamine + diphosphate. It participates in nucleotide-sugar biosynthesis; UDP-N-acetyl-alpha-D-glucosamine biosynthesis; N-acetyl-alpha-D-glucosamine 1-phosphate from alpha-D-glucosamine 6-phosphate (route II): step 2/2. It functions in the pathway nucleotide-sugar biosynthesis; UDP-N-acetyl-alpha-D-glucosamine biosynthesis; UDP-N-acetyl-alpha-D-glucosamine from N-acetyl-alpha-D-glucosamine 1-phosphate: step 1/1. The protein operates within bacterial outer membrane biogenesis; LPS lipid A biosynthesis. In terms of biological role, catalyzes the last two sequential reactions in the de novo biosynthetic pathway for UDP-N-acetylglucosamine (UDP-GlcNAc). The C-terminal domain catalyzes the transfer of acetyl group from acetyl coenzyme A to glucosamine-1-phosphate (GlcN-1-P) to produce N-acetylglucosamine-1-phosphate (GlcNAc-1-P), which is converted into UDP-GlcNAc by the transfer of uridine 5-monophosphate (from uridine 5-triphosphate), a reaction catalyzed by the N-terminal domain. The chain is Bifunctional protein GlmU from Dechloromonas aromatica (strain RCB).